The chain runs to 941 residues: Isoleucine--tRNA ligase (941 aa).

The 'HIGH' region motif lies at Pro59–His69. Glu562 is an L-isoleucyl-5'-AMP binding site. A 'KMSKS' region motif is present at residues Lys603–Ser607. Residue Lys606 participates in ATP binding. Zn(2+)-binding residues include Cys904, Cys907, Cys924, and Cys927.

It belongs to the class-I aminoacyl-tRNA synthetase family. IleS type 1 subfamily. As to quaternary structure, monomer. The cofactor is Zn(2+).

It localises to the cytoplasm. It catalyses the reaction tRNA(Ile) + L-isoleucine + ATP = L-isoleucyl-tRNA(Ile) + AMP + diphosphate. Functionally, catalyzes the attachment of isoleucine to tRNA(Ile). As IleRS can inadvertently accommodate and process structurally similar amino acids such as valine, to avoid such errors it has two additional distinct tRNA(Ile)-dependent editing activities. One activity is designated as 'pretransfer' editing and involves the hydrolysis of activated Val-AMP. The other activity is designated 'posttransfer' editing and involves deacylation of mischarged Val-tRNA(Ile). This chain is Isoleucine--tRNA ligase, found in Haemophilus influenzae (strain PittEE).